Reading from the N-terminus, the 553-residue chain is Arginine--tRNA ligase (553 aa).

Residues 130 to 140 (ANPTGPIHLGG) carry the 'HIGH' region motif.

It belongs to the class-I aminoacyl-tRNA synthetase family. Monomer.

It is found in the cytoplasm. It carries out the reaction tRNA(Arg) + L-arginine + ATP = L-arginyl-tRNA(Arg) + AMP + diphosphate. In Corynebacterium aurimucosum (strain ATCC 700975 / DSM 44827 / CIP 107346 / CN-1) (Corynebacterium nigricans), this protein is Arginine--tRNA ligase.